A 325-amino-acid chain; its full sequence is MSSGADVPSDAPAHCPGTQSDDAGKASACAGCPNQQLCATGPKGPDPAIALVRQKLADVRNKLLVLSGKGGVGKSTVTALLSRAMAHRNPDENFGVLDIDICGPSQPRVLGVLGEQVHQSGSGWSPVYIEDNLSLMSIGFLLGSPDDAIIWRGPKKNGMIRQFLTEVDWGQLDYLVLDTPPGTSDEHLSATTFLKGTDGSWGAVLVTTPQEVALLDVRKEISFCKKLAIPVVGVIENMSAFVCPKCTTETRIFPARTDGGGAEQMCIEMEVPYLGQLPLDPRLTKCCDEGKDFITEFPTSPAVVALEEIVTKVRQFFGDGKGERQ.

Residues 1–26 (MSSGADVPSDAPAHCPGTQSDDAGKA) form a disordered region. [4Fe-4S] cluster is bound by residues Cys15, Cys29, Cys32, and Cys38. 68 to 75 (GKGGVGKS) contacts ATP. [4Fe-4S] cluster is bound by residues Cys243 and Cys246.

The protein belongs to the Mrp/NBP35 ATP-binding proteins family. NUBP1/NBP35 subfamily. As to quaternary structure, heterotetramer of 2 Nubp1 and 2 Nubp2 chains. The cofactor is [4Fe-4S] cluster.

It localises to the cytoplasm. Functionally, component of the cytosolic iron-sulfur (Fe/S) protein assembly (CIA) machinery. Required for maturation of extramitochondrial Fe-S proteins. The Nubp1-Nubp2 heterotetramer forms a Fe-S scaffold complex, mediating the de novo assembly of an Fe-S cluster and its transfer to target apoproteins. In Anopheles gambiae (African malaria mosquito), this protein is Cytosolic Fe-S cluster assembly factor Nubp1 homolog.